The sequence spans 371 residues: 4-hydroxy-3-methylbut-2-en-1-yl diphosphate synthase (flavodoxin) (371 aa).

Residues cysteine 270, cysteine 273, cysteine 305, and glutamate 312 each contribute to the [4Fe-4S] cluster site.

Belongs to the IspG family. The cofactor is [4Fe-4S] cluster.

The enzyme catalyses (2E)-4-hydroxy-3-methylbut-2-enyl diphosphate + oxidized [flavodoxin] + H2O + 2 H(+) = 2-C-methyl-D-erythritol 2,4-cyclic diphosphate + reduced [flavodoxin]. Its pathway is isoprenoid biosynthesis; isopentenyl diphosphate biosynthesis via DXP pathway; isopentenyl diphosphate from 1-deoxy-D-xylulose 5-phosphate: step 5/6. Functionally, converts 2C-methyl-D-erythritol 2,4-cyclodiphosphate (ME-2,4cPP) into 1-hydroxy-2-methyl-2-(E)-butenyl 4-diphosphate. This Psychrobacter arcticus (strain DSM 17307 / VKM B-2377 / 273-4) protein is 4-hydroxy-3-methylbut-2-en-1-yl diphosphate synthase (flavodoxin).